The primary structure comprises 458 residues: V-type ATP synthase beta chain (458 aa).

The protein belongs to the ATPase alpha/beta chains family.

Functionally, produces ATP from ADP in the presence of a proton gradient across the membrane. The V-type beta chain is a regulatory subunit. The sequence is that of V-type ATP synthase beta chain from Fusobacterium nucleatum subsp. nucleatum (strain ATCC 25586 / DSM 15643 / BCRC 10681 / CIP 101130 / JCM 8532 / KCTC 2640 / LMG 13131 / VPI 4355).